The following is a 222-amino-acid chain: Triosephosphate isomerase (222 aa).

10–12 is a binding site for substrate; sequence NCK. Histidine 93 functions as the Electrophile in the catalytic mechanism. Glutamate 141 functions as the Proton acceptor in the catalytic mechanism. Substrate contacts are provided by residues isoleucine 146, glycine 180, and 201-202; that span reads AS.

This sequence belongs to the triosephosphate isomerase family. Homotetramer; dimer of dimers.

It is found in the cytoplasm. The enzyme catalyses D-glyceraldehyde 3-phosphate = dihydroxyacetone phosphate. Its pathway is carbohydrate biosynthesis; gluconeogenesis. It participates in carbohydrate degradation; glycolysis; D-glyceraldehyde 3-phosphate from glycerone phosphate: step 1/1. Its function is as follows. Involved in the gluconeogenesis. Catalyzes stereospecifically the conversion of dihydroxyacetone phosphate (DHAP) to D-glyceraldehyde-3-phosphate (G3P). The chain is Triosephosphate isomerase from Cenarchaeum symbiosum (strain A).